A 266-amino-acid chain; its full sequence is Phosphate import ATP-binding protein PstB 1 (266 aa).

The 241-residue stretch at 21–261 folds into the ABC transporter domain; it reads ISTQDLSVFY…PKGEITEDYI (241 aa). 54–61 contacts ATP; the sequence is GGSGSGKS.

This sequence belongs to the ABC transporter superfamily. Phosphate importer (TC 3.A.1.7) family. In terms of assembly, the complex is composed of two ATP-binding proteins (PstB), two transmembrane proteins (PstC and PstA) and a solute-binding protein (PstS).

It localises to the cell membrane. It carries out the reaction phosphate(out) + ATP + H2O = ADP + 2 phosphate(in) + H(+). Its function is as follows. Part of the ABC transporter complex PstSACB involved in phosphate import. Responsible for energy coupling to the transport system. The chain is Phosphate import ATP-binding protein PstB 1 from Lactobacillus johnsonii (strain CNCM I-12250 / La1 / NCC 533).